We begin with the raw amino-acid sequence, 349 residues long: Protein RecA (349 aa).

ATP is bound at residue 65–72; it reads GPESSGKT.

It belongs to the RecA family.

It localises to the cytoplasm. Can catalyze the hydrolysis of ATP in the presence of single-stranded DNA, the ATP-dependent uptake of single-stranded DNA by duplex DNA, and the ATP-dependent hybridization of homologous single-stranded DNAs. It interacts with LexA causing its activation and leading to its autocatalytic cleavage. In Enterococcus faecium (Streptococcus faecium), this protein is Protein RecA.